Reading from the N-terminus, the 354-residue chain is Uroporphyrinogen decarboxylase (354 aa).

Substrate contacts are provided by residues 27–31, Asp-77, Tyr-154, Thr-209, and His-327; that span reads RQAGR.

Belongs to the uroporphyrinogen decarboxylase family. As to quaternary structure, homodimer.

It is found in the cytoplasm. The catalysed reaction is uroporphyrinogen III + 4 H(+) = coproporphyrinogen III + 4 CO2. The protein operates within porphyrin-containing compound metabolism; protoporphyrin-IX biosynthesis; coproporphyrinogen-III from 5-aminolevulinate: step 4/4. In terms of biological role, catalyzes the decarboxylation of four acetate groups of uroporphyrinogen-III to yield coproporphyrinogen-III. The protein is Uroporphyrinogen decarboxylase of Shigella dysenteriae serotype 1 (strain Sd197).